Here is a 259-residue protein sequence, read N- to C-terminus: Deoxyribose-phosphate aldolase (259 aa).

Catalysis depends on Asp102, which acts as the Proton donor/acceptor. Lys167 (schiff-base intermediate with acetaldehyde) is an active-site residue. Residue Lys201 is the Proton donor/acceptor of the active site.

The protein belongs to the DeoC/FbaB aldolase family. DeoC type 2 subfamily.

The protein localises to the cytoplasm. It catalyses the reaction 2-deoxy-D-ribose 5-phosphate = D-glyceraldehyde 3-phosphate + acetaldehyde. It participates in carbohydrate degradation; 2-deoxy-D-ribose 1-phosphate degradation; D-glyceraldehyde 3-phosphate and acetaldehyde from 2-deoxy-alpha-D-ribose 1-phosphate: step 2/2. Functionally, catalyzes a reversible aldol reaction between acetaldehyde and D-glyceraldehyde 3-phosphate to generate 2-deoxy-D-ribose 5-phosphate. In Shigella boydii serotype 4 (strain Sb227), this protein is Deoxyribose-phosphate aldolase.